The chain runs to 57 residues: Large ribosomal subunit protein bL32 (57 aa).

Positions 1 to 19 (MATPKFKKSRANTHSRRSQ) are enriched in basic residues. Residues 1–20 (MATPKFKKSRANTHSRRSQW) form a disordered region.

This sequence belongs to the bacterial ribosomal protein bL32 family.

This chain is Large ribosomal subunit protein bL32, found in Corynebacterium aurimucosum (strain ATCC 700975 / DSM 44827 / CIP 107346 / CN-1) (Corynebacterium nigricans).